The primary structure comprises 223 residues: Phosphoribosylformylglycinamidine synthase subunit PurQ (223 aa).

The Glutamine amidotransferase type-1 domain occupies 2–223 (KFAVIQFPGS…ASVLKNFVGK (222 aa)). Catalysis depends on Cys-86, which acts as the Nucleophile. Residues His-195 and Glu-197 contribute to the active site.

Part of the FGAM synthase complex composed of 1 PurL, 1 PurQ and 2 PurS subunits.

Its subcellular location is the cytoplasm. It carries out the reaction N(2)-formyl-N(1)-(5-phospho-beta-D-ribosyl)glycinamide + L-glutamine + ATP + H2O = 2-formamido-N(1)-(5-O-phospho-beta-D-ribosyl)acetamidine + L-glutamate + ADP + phosphate + H(+). The catalysed reaction is L-glutamine + H2O = L-glutamate + NH4(+). It participates in purine metabolism; IMP biosynthesis via de novo pathway; 5-amino-1-(5-phospho-D-ribosyl)imidazole from N(2)-formyl-N(1)-(5-phospho-D-ribosyl)glycinamide: step 1/2. Its function is as follows. Part of the phosphoribosylformylglycinamidine synthase complex involved in the purines biosynthetic pathway. Catalyzes the ATP-dependent conversion of formylglycinamide ribonucleotide (FGAR) and glutamine to yield formylglycinamidine ribonucleotide (FGAM) and glutamate. The FGAM synthase complex is composed of three subunits. PurQ produces an ammonia molecule by converting glutamine to glutamate. PurL transfers the ammonia molecule to FGAR to form FGAM in an ATP-dependent manner. PurS interacts with PurQ and PurL and is thought to assist in the transfer of the ammonia molecule from PurQ to PurL. In Lactococcus lactis subsp. lactis (strain IL1403) (Streptococcus lactis), this protein is Phosphoribosylformylglycinamidine synthase subunit PurQ.